Here is a 46-residue protein sequence, read N- to C-terminus: Short transmembrane mitochondrial protein 1 (46 aa).

The helical transmembrane segment at 7 to 23 (GFTLGNVVGMYLAQNYE) threads the bilayer.

This sequence belongs to the STMP1 family. As to expression, widely expressed. Expressed more abundantly in brain compared with other tissues such as heart, muscle and liver.

The protein localises to the mitochondrion inner membrane. It is found in the mitochondrion outer membrane. It localises to the mitochondrion intermembrane space. In terms of biological role, microprotein involved in mitochondrial respiratory chain complex III (ubiquinol-cytochrome c oxidoreductase) and complex IV (mitochondrial cytochrome c oxidase complex) assembly. Required for the formation of mitochondrial supercomplexes (SCs). Also required for the activation of the NLRP3 inflammasome. This is Short transmembrane mitochondrial protein 1 from Danio rerio (Zebrafish).